The chain runs to 231 residues: MNDPRIIVALDFPDQCTALNFAAGLDSTLCRVKVGKELFTLAGPQLVEKLMKLGFDVFLDLKFHDIPNTVAAACSAASSLGVWMVNVHALGGSKMLLAARQALDGKRTRLIAVTLLTSLNQNDLSELGIADTPETMVQRLALLAQRCGLDGVVCSALEAVSLREVTGEDFCLVTPGIRSFGDGNDDQARIATPAMAIRSGASYLVIGRPITRSPDPLGALRRFNDEVASVL.

Residues D11, K33, 60-69 (DLKFHDIPNT), T117, R178, Q187, G207, and R208 contribute to the substrate site. K62 functions as the Proton donor in the catalytic mechanism.

The protein belongs to the OMP decarboxylase family. Type 1 subfamily. Homodimer.

The catalysed reaction is orotidine 5'-phosphate + H(+) = UMP + CO2. It participates in pyrimidine metabolism; UMP biosynthesis via de novo pathway; UMP from orotate: step 2/2. Its function is as follows. Catalyzes the decarboxylation of orotidine 5'-monophosphate (OMP) to uridine 5'-monophosphate (UMP). This chain is Orotidine 5'-phosphate decarboxylase, found in Nitrosomonas europaea (strain ATCC 19718 / CIP 103999 / KCTC 2705 / NBRC 14298).